The primary structure comprises 162 residues: MKTVIYPGSFDPPTNGHLDIIQRAARVFDKVIVAVLNNPEKNPMFTVAERRKMLEMITKEYANVEIDDFNGLLVDYVREKQVSIVIKGLRAISDFENEMQMALTNRKLAPDIETIFMMTNHKCSFLSSSVVKEVVAFDGCIEGLVPEQIQDYIIEKRNSQRK.

S9 is a binding site for substrate. Residues 9–10 (SF) and H17 contribute to the ATP site. K41, L73, and K87 together coordinate substrate. ATP contacts are provided by residues 88–90 (GLR), E98, and 123–129 (CSFLSSS).

The protein belongs to the bacterial CoaD family. Homohexamer. The cofactor is Mg(2+).

Its subcellular location is the cytoplasm. It catalyses the reaction (R)-4'-phosphopantetheine + ATP + H(+) = 3'-dephospho-CoA + diphosphate. It functions in the pathway cofactor biosynthesis; coenzyme A biosynthesis; CoA from (R)-pantothenate: step 4/5. Its function is as follows. Reversibly transfers an adenylyl group from ATP to 4'-phosphopantetheine, yielding dephospho-CoA (dPCoA) and pyrophosphate. The protein is Phosphopantetheine adenylyltransferase of Natranaerobius thermophilus (strain ATCC BAA-1301 / DSM 18059 / JW/NM-WN-LF).